Reading from the N-terminus, the 355-residue chain is S-adenosylmethionine:tRNA ribosyltransferase-isomerase (355 aa).

The protein belongs to the QueA family. Monomer.

It localises to the cytoplasm. The catalysed reaction is 7-aminomethyl-7-carbaguanosine(34) in tRNA + S-adenosyl-L-methionine = epoxyqueuosine(34) in tRNA + adenine + L-methionine + 2 H(+). Its pathway is tRNA modification; tRNA-queuosine biosynthesis. Its function is as follows. Transfers and isomerizes the ribose moiety from AdoMet to the 7-aminomethyl group of 7-deazaguanine (preQ1-tRNA) to give epoxyqueuosine (oQ-tRNA). This is S-adenosylmethionine:tRNA ribosyltransferase-isomerase from Burkholderia orbicola (strain MC0-3).